A 324-amino-acid chain; its full sequence is Probable nicotianamine synthase 4 (324 aa).

It belongs to the nicotianamine synthase (NAS)-like family.

The catalysed reaction is 3 S-adenosyl-L-methionine = nicotianamine + 3 S-methyl-5'-thioadenosine + 3 H(+). Functionally, synthesizes nicotianamine, a polyamine which serves as a sensor for the physiological iron status within the plant, and/or might be involved in the transport of iron. This chain is Probable nicotianamine synthase 4 (NAS4), found in Arabidopsis thaliana (Mouse-ear cress).